The following is an 80-amino-acid chain: Large ribosomal subunit protein bL31B (80 aa).

It belongs to the bacterial ribosomal protein bL31 family. Type B subfamily. Part of the 50S ribosomal subunit.

This Xylella fastidiosa (strain M23) protein is Large ribosomal subunit protein bL31B.